We begin with the raw amino-acid sequence, 250 residues long: Proteasome subunit alpha type-7 (250 aa).

Belongs to the peptidase T1A family. In terms of assembly, the 26S proteasome consists of a 20S proteasome core and two 19S regulatory subunits. The 20S proteasome core is composed of 28 subunits that are arranged in four stacked rings, resulting in a barrel-shaped structure. The two end rings are each formed by seven alpha subunits, and the two central rings are each formed by seven beta subunits. The catalytic chamber with the active sites is on the inside of the barrel.

The protein localises to the cytoplasm. It is found in the nucleus. Functionally, the proteasome is a multicatalytic proteinase complex which is characterized by its ability to cleave peptides with Arg, Phe, Tyr, Leu, and Glu adjacent to the leaving group at neutral or slightly basic pH. The proteasome has an ATP-dependent proteolytic activity. The polypeptide is Proteasome subunit alpha type-7 (psmA7) (Dictyostelium discoideum (Social amoeba)).